Reading from the N-terminus, the 280-residue chain is Energy-coupling factor transporter ATP-binding protein EcfA2 (280 aa).

The ABC transporter domain maps to 3–245; sequence INLQNVSYTY…VSLLEKKQLG (243 aa). An ATP-binding site is contributed by 40–47; that stretch reads GHTGSGKS.

It belongs to the ABC transporter superfamily. Energy-coupling factor EcfA family. In terms of assembly, forms a stable energy-coupling factor (ECF) transporter complex composed of 2 membrane-embedded substrate-binding proteins (S component), 2 ATP-binding proteins (A component) and 2 transmembrane proteins (T component).

The protein localises to the cell membrane. Functionally, ATP-binding (A) component of a common energy-coupling factor (ECF) ABC-transporter complex. Unlike classic ABC transporters this ECF transporter provides the energy necessary to transport a number of different substrates. This is Energy-coupling factor transporter ATP-binding protein EcfA2 from Streptococcus pyogenes serotype M3 (strain ATCC BAA-595 / MGAS315).